The primary structure comprises 146 residues: Cytidine deaminase (146 aa).

In terms of domain architecture, CMP/dCMP-type deaminase spans 13 to 140 (EHVQRLLLSS…ELLPASFGPE (128 aa)). Substrate is bound at residue 54 to 56 (NIE). Cysteine 65 contributes to the Zn(2+) binding site. The active-site Proton donor is glutamate 67. The Zn(2+) site is built by cysteine 99 and cysteine 102.

This sequence belongs to the cytidine and deoxycytidylate deaminase family. As to quaternary structure, homotetramer. Zn(2+) serves as cofactor.

It catalyses the reaction cytidine + H2O + H(+) = uridine + NH4(+). It carries out the reaction 2'-deoxycytidine + H2O + H(+) = 2'-deoxyuridine + NH4(+). Its function is as follows. This enzyme scavenges exogenous and endogenous cytidine and 2'-deoxycytidine for UMP synthesis. The sequence is that of Cytidine deaminase (Cda) from Mus musculus (Mouse).